Consider the following 977-residue polypeptide: MRGYHGDRGSHPRPARFADQQHMDVGPAARAPYLLGSREAFSTEPRFCAPRAGLGHLSPEGPLSLSEGPSSVGPEGGPGGVGAGGSSSTFPRMYPGQGPFDTCEDCVGHPQGKGATRLLPTFLDQFEKQLPVQQDGFHTLPYQRGPAGPGPGPGSGAAPEARSESPSRIRHLVHSVQKLFAKSHSLEAPGKRDYNGPKAEGRSSSGGDSYSGPGSGGPPTSHHHHHHHHHHHHQSRHGKRSKSKDRKGDGRHQTKATGWWSSDDNLDSDSGFLGGRPPGEPGGPFCLDAPDGSYRDLSFKGRSGGSEGRCLACTGMSMSLDGQSVKRSAWHTMMVSQGRDGYPGAGPGKGLLGPETKAKARTYHYLQVPQDDWGGYPTGGKDGEIPCRRMRSGSYIKAMGDEESGDSDGSPKTSPKALARRFASRRSSSVDTARINCCVPPRIHPRSSIPGYSRSLTTGQLSEEFNQQLEAVCGSVFGELESQAVDALDLPGCFRMRSHSYLRAIQAGCSQDDDCLPLLAAPASVSGRPGSSFNFRKAPPPIPPGSQAPPRISITAQSSTDSAHESFTAAEGPARRCSSADGLDGPTMGARTLELAPVPPRASPKPPTLIIKTIPGREELRSLARQRKWRPSIGVQVETISDSDTENRSRREFHSIGVQVEEDKRRARFKRSNSVTAGVQADLELEGLAGLATVATEDKALQFGRPFQRQASEPQPGPRAPTYSVFRTVHTQGQWAYREGYPLPYEPPATDGSPGPPPVPAPGPGSGRRDSWMERGSRSLPDSGRTSPCPRDGEWFIKMLRAEVEKLEHWCQQMEREAEDYELPEEILEKIRSAVGSTQLLLSQKVQQFFRLCQQSLDPTAFPVPTFQDLAGFWDLLQLSIEDVTLKFLELQQLKANSWKLLEPKEEKKVPPPIPKKPSRGRGVPVKERSLDSVDRQRQEARKRLLAAKRAASFRHSSATESADSIEIYIPEAQTRL.

A compositionally biased stretch (basic and acidic residues) spans 1–10; that stretch reads MRGYHGDRGS. Disordered regions lie at residues 1 to 30, 52 to 90, 137 to 167, 181 to 289, 398 to 417, and 529 to 582; these read MRGY…PAAR, AGLG…SSTF, FHTL…ESPS, AKSH…CLDA, AMGD…SPKA, and PGSS…SADG. A compositionally biased stretch (low complexity) spans 53-73; it reads GLGHLSPEGPLSLSEGPSSVG. Ser58 is subject to Phosphoserine. Residues 74–85 are compositionally biased toward gly residues; it reads PEGGPGGVGAGG. The segment covering 189–201 has biased composition (basic and acidic residues); it reads PGKRDYNGPKAEG. Over residues 202–212 the composition is skewed to low complexity; the sequence is RSSSGGDSYSG. A compositionally biased stretch (basic residues) spans 221 to 245; sequence SHHHHHHHHHHHHQSRHGKRSKSKD. Residues 258–271 are compositionally biased toward low complexity; the sequence is GWWSSDDNLDSDSG. Residues Ser404, Ser407, Ser410, and Ser414 each carry the phosphoserine modification. Residues 538–547 show a composition bias toward pro residues; that stretch reads APPPIPPGSQ. Phosphoserine is present on residues Ser641 and Ser643. Disordered regions lie at residues 739–788 and 906–939; these read EGYP…RTSP and EEKK…RQRQ. Over residues 754 to 763 the composition is skewed to pro residues; sequence PGPPPVPAPG. Composition is skewed to basic and acidic residues over residues 767 to 777 and 925 to 939; these read GRRDSWMERGS and PVKE…RQRQ. 3 positions are modified to phosphoserine: Ser930, Ser933, and Ser965.

It belongs to the SAPAP family. In terms of assembly, interacts with DLG1 and DLG4/PSD-95. As to expression, expressed in most brain regions.

It is found in the cell membrane. The protein localises to the postsynaptic density. Its subcellular location is the synapse. Functionally, may play a role in the molecular organization of synapses and neuronal cell signaling. Could be an adapter protein linking ion channel to the subsynaptic cytoskeleton. May induce enrichment of PSD-95/SAP90 at the plasma membrane. In Rattus norvegicus (Rat), this protein is Disks large-associated protein 3 (Dlgap3).